Here is a 182-residue protein sequence, read N- to C-terminus: Large ribosomal subunit protein uL5 (182 aa).

It belongs to the universal ribosomal protein uL5 family. In terms of assembly, part of the 50S ribosomal subunit; part of the 5S rRNA/L5/L18/L25 subcomplex. Contacts the 5S rRNA and the P site tRNA. Forms a bridge to the 30S subunit in the 70S ribosome.

Its function is as follows. This is one of the proteins that bind and probably mediate the attachment of the 5S RNA into the large ribosomal subunit, where it forms part of the central protuberance. In the 70S ribosome it contacts protein S13 of the 30S subunit (bridge B1b), connecting the 2 subunits; this bridge is implicated in subunit movement. Contacts the P site tRNA; the 5S rRNA and some of its associated proteins might help stabilize positioning of ribosome-bound tRNAs. This Leptospira interrogans serogroup Icterohaemorrhagiae serovar copenhageni (strain Fiocruz L1-130) protein is Large ribosomal subunit protein uL5.